The following is a 351-amino-acid chain: SKP1-like protein 21 (351 aa).

An interaction with the F-box domain of F-box proteins region spans residues 108–167 (TSAADSLQLKPLVDLTSRALARIIEGKTPEEIREIFHLPDDLTEEEKLEPLKNTMDDPRI). 2 disordered regions span residues 216–240 (VKTS…NGTC) and 330–351 (VNFS…AGHK). Positions 217 to 230 (KTSKSKKKNKKRKE) are enriched in basic residues. Residues 330 to 342 (VNFSINGNGTSRR) show a composition bias toward polar residues.

It belongs to the SKP1 family. Part of a SCF (SKP1-cullin-F-box) protein ligase complex. Expressed in young seedlings, roots, leaves, floral stems, inflorescences, and siliques.

The protein resides in the nucleus. It functions in the pathway protein modification; protein ubiquitination. In terms of biological role, involved in ubiquitination and subsequent proteasomal degradation of target proteins. Together with CUL1, RBX1 and a F-box protein, it forms a SCF E3 ubiquitin ligase complex. The functional specificity of this complex depends on the type of F-box protein. In the SCF complex, it serves as an adapter that links the F-box protein to CUL1. The chain is SKP1-like protein 21 (ASK21) from Arabidopsis thaliana (Mouse-ear cress).